Consider the following 96-residue polypeptide: Putative regulatory protein DET0036 (96 aa).

The protein belongs to the RemA family.

This Dehalococcoides mccartyi (strain ATCC BAA-2266 / KCTC 15142 / 195) (Dehalococcoides ethenogenes (strain 195)) protein is Putative regulatory protein DET0036.